We begin with the raw amino-acid sequence, 182 residues long: Vacuolar protein sorting-associated protein 29 (182 aa).

Residues aspartate 8, histidine 10, and asparagine 39 each coordinate Zn(2+). Lysine 50 bears the N6-acetyllysine mark. Aspartate 62, histidine 86, histidine 115, and histidine 117 together coordinate Zn(2+).

This sequence belongs to the VPS29 family. Component of the commander complex consisting of the CCC subcomplex and the retriever subcomplex. Component of the heterotrimeric retriever complex formed by VPS26C, VPS29 and VPS35L; within the complex interacts with VPS35L. Component of the heterotrimeric retromer cargo-selective complex (CSC), also described as vacuolar protein sorting subcomplex (VPS), formed by VPS26 (VPS26A or VPS26B), VPS29 and VPS35. The CSC has a highly elongated structure with VPS26 and VPS29 binding independently at opposite distal ends of VPS35 as central platform. The CSC is believed to associate with variable sorting nexins to form functionally distinct retromer complex variants. The originally described retromer complex (also called SNX-BAR retromer) is a pentamer containing the CSC and a heterodimeric membrane-deforming subcomplex formed between SNX1 or SNX2 and SNX5 or SNX6 (also called SNX-BAR subcomplex); the respective CSC and SNX-BAR subcomplexes associate with low affinity. The CSC associates with SNX3 to form a SNX3-retromer complex. The CSC associates with SNX27, the WASH complex and the SNX-BAR subcomplex to form the SNX27-retromer complex. Interacts with VPS26A, VPS35, SNX1, SNX2, SNX3, SNX27, WASHC5. Interacts with TBC1D5; this interaction is blocked by VPS35L in the retriever complex. Interacts with SNX17; the interaction is indirect; SNX17 (via its C-terminus) interacts with the retriever complex (via VPS26C and VPS35L). Interacts with VPS26B and ANKRD27. As to quaternary structure, (Microbial infection) Interacts with human papillomavirus 16 minor capsid protein L2 (via C-terminus); this interaction mediates the transport of the capsid from the early endosome to the Golgi apparatus. As to expression, ubiquitous. Highly expressed in heart, lung, placenta, spleen, peripheral blood leukocytes, thymus, colon skeletal muscle, kidney and brain.

It is found in the cytoplasm. The protein resides in the membrane. Its subcellular location is the endosome membrane. The protein localises to the early endosome. It localises to the late endosome. Its function is as follows. Component of the commander complex that is essential for endosomal recycling of transmembrane cargos; the commander complex is composed of the CCC subcomplex and the retriever subcomplex. Component of the retriever complex, which is a heterotrimeric complex related to retromer cargo-selective complex (CSC) and essential for retromer-independent retrieval and recycling of numerous cargos such as integrin alpha-5/beta-1 (ITGA5:ITGB1). Component of the retromer cargo-selective complex (CSC). The CSC is believed to be the core functional component of retromer or respective retromer complex variants acting to prevent missorting of selected transmembrane cargo proteins into the lysosomal degradation pathway. The recruitment of the CSC to the endosomal membrane involves RAB7A and SNX3. The SNX-BAR retromer mediates retrograde transport of cargo proteins from endosomes to the trans-Golgi network (TGN) and is involved in endosome-to-plasma membrane transport for cargo protein recycling. The SNX3-retromer mediates the retrograde endosome-to-TGN transport of WLS distinct from the SNX-BAR retromer pathway. The SNX27-retromer is believed to be involved in endosome-to-plasma membrane trafficking and recycling of a broad spectrum of cargo proteins. The CSC seems to act as recruitment hub for other proteins, such as the WASH complex and TBC1D5. Required to regulate transcytosis of the polymeric immunoglobulin receptor (pIgR-pIgA). In the endosomes, retriever complex drives the retrieval and recycling of NxxY-motif-containing cargo proteins by coupling to SNX17, a cargo essential for the homeostatic maintenance of numerous cell surface proteins associated with processes that include cell migration, cell adhesion, nutrient supply and cell signaling. The recruitment of the retriever complex to the endosomal membrane involves CCC and WASH complexes. Involved in GLUT1 endosome-to-plasma membrane trafficking; the function is dependent of association with ANKRD27. In terms of biological role, (Microbial infection) The heterotrimeric retromer cargo-selective complex (CSC) mediates the exit of human papillomavirus from the early endosome and the delivery to the Golgi apparatus. The sequence is that of Vacuolar protein sorting-associated protein 29 from Homo sapiens (Human).